The chain runs to 148 residues: FAD synthase (148 aa).

ATP-binding positions include 14-15 (TF), 19-22 (HPGH), and D97.

This sequence belongs to the archaeal FAD synthase family. Homodimer. It depends on a divalent metal cation as a cofactor.

It carries out the reaction FMN + ATP + H(+) = FAD + diphosphate. It functions in the pathway cofactor biosynthesis; FAD biosynthesis; FAD from FMN: step 1/1. Its function is as follows. Catalyzes the transfer of the AMP portion of ATP to flavin mononucleotide (FMN) to produce flavin adenine dinucleotide (FAD) coenzyme. The polypeptide is FAD synthase (Natrialba magadii (strain ATCC 43099 / DSM 3394 / CCM 3739 / CIP 104546 / IAM 13178 / JCM 8861 / NBRC 102185 / NCIMB 2190 / MS3) (Natronobacterium magadii)).